A 236-amino-acid polypeptide reads, in one-letter code: Leucyl/phenylalanyl-tRNA--protein transferase (236 aa).

The protein belongs to the L/F-transferase family.

Its subcellular location is the cytoplasm. The enzyme catalyses N-terminal L-lysyl-[protein] + L-leucyl-tRNA(Leu) = N-terminal L-leucyl-L-lysyl-[protein] + tRNA(Leu) + H(+). It catalyses the reaction N-terminal L-arginyl-[protein] + L-leucyl-tRNA(Leu) = N-terminal L-leucyl-L-arginyl-[protein] + tRNA(Leu) + H(+). The catalysed reaction is L-phenylalanyl-tRNA(Phe) + an N-terminal L-alpha-aminoacyl-[protein] = an N-terminal L-phenylalanyl-L-alpha-aminoacyl-[protein] + tRNA(Phe). Functionally, functions in the N-end rule pathway of protein degradation where it conjugates Leu, Phe and, less efficiently, Met from aminoacyl-tRNAs to the N-termini of proteins containing an N-terminal arginine or lysine. The protein is Leucyl/phenylalanyl-tRNA--protein transferase of Shewanella sp. (strain MR-4).